The following is a 185-amino-acid chain: Elongation factor P (185 aa).

It belongs to the elongation factor P family.

Its subcellular location is the cytoplasm. The protein operates within protein biosynthesis; polypeptide chain elongation. In terms of biological role, involved in peptide bond synthesis. Stimulates efficient translation and peptide-bond synthesis on native or reconstituted 70S ribosomes in vitro. Probably functions indirectly by altering the affinity of the ribosome for aminoacyl-tRNA, thus increasing their reactivity as acceptors for peptidyl transferase. In Streptococcus pyogenes serotype M28 (strain MGAS6180), this protein is Elongation factor P.